Consider the following 298-residue polypeptide: Probable tRNA(His) guanylyltransferase (298 aa).

The Mg(2+) site is built by D58, G59, and D105. Residues 58–63 and 104–105 contribute to the GTP site; these read DGRNFH and SD.

Belongs to the tRNA(His) guanylyltransferase family. As to quaternary structure, homotetramer. Interacts with MFN1 and MFN2; functions as a guanyl-nucleotide exchange factor/GEF for MFN2 and also probably MFN1. Mg(2+) is required as a cofactor.

The protein localises to the cytoplasm. It is found in the mitochondrion. The enzyme catalyses a 5'-end ribonucleotide-tRNA(His) + GTP + ATP + H2O = a 5'-end phospho-guanosine-ribonucleotide-tRNA(His) + AMP + 2 diphosphate + H(+). In terms of biological role, adds a GMP to the 5'-end of tRNA(His) after transcription and RNase P cleavage. This step is essential for proper recognition of the tRNA and for the fidelity of protein synthesis. Also functions as a guanyl-nucleotide exchange factor/GEF for the MFN1 and MFN2 mitofusins thereby regulating mitochondrial fusion. By regulating both mitochondrial dynamics and bioenergetic function, it contributes to cell survival following oxidative stress. In Bos taurus (Bovine), this protein is Probable tRNA(His) guanylyltransferase (THG1L).